The sequence spans 104 residues: Large ribosomal subunit protein uL24 (104 aa).

The protein belongs to the universal ribosomal protein uL24 family. As to quaternary structure, part of the 50S ribosomal subunit.

Its function is as follows. One of two assembly initiator proteins, it binds directly to the 5'-end of the 23S rRNA, where it nucleates assembly of the 50S subunit. In terms of biological role, one of the proteins that surrounds the polypeptide exit tunnel on the outside of the subunit. The sequence is that of Large ribosomal subunit protein uL24 from Aliivibrio fischeri (strain ATCC 700601 / ES114) (Vibrio fischeri).